We begin with the raw amino-acid sequence, 102 residues long: Small ribosomal subunit protein uS14 (102 aa).

Belongs to the universal ribosomal protein uS14 family. Part of the 30S ribosomal subunit. Contacts proteins S3 and S10.

Functionally, binds 16S rRNA, required for the assembly of 30S particles and may also be responsible for determining the conformation of the 16S rRNA at the A site. In Wolbachia sp. subsp. Brugia malayi (strain TRS), this protein is Small ribosomal subunit protein uS14.